The sequence spans 128 residues: Small ribosomal subunit protein uS9 (128 aa).

As to quaternary structure, part of the 30S ribosomal subunit. Contacts proteins S7 and S10.

Functionally, part of the top of the head of the 30S subunit. The C-terminal region penetrates the head emerging in the P-site where it contacts tRNA. This is Small ribosomal subunit protein uS9 (rpsI) from Thermus thermophilus (strain ATCC 27634 / DSM 579 / HB8).